A 157-amino-acid chain; its full sequence is Short-type peptidyl-prolyl cis-trans isomerase (157 aa).

The region spanning 1-95 (MINLIKKGDY…RDERLIQEIP (95 aa)) is the PPIase FKBP-type domain. The segment at 86-137 (RDERLIQEIPKEMFADADFEPQEGMLILASGIPAKIIKVTDDTVTLDFNHEL) is IF.

The protein belongs to the FKBP-type PPIase family.

The protein localises to the cytoplasm. It carries out the reaction [protein]-peptidylproline (omega=180) = [protein]-peptidylproline (omega=0). Functionally, catalyzes the cis-trans isomerization of peptidyl prolyl bonds and accelerates protein folding. Also exhibits chaperone-like activity. This chain is Short-type peptidyl-prolyl cis-trans isomerase, found in Methanocaldococcus jannaschii (strain ATCC 43067 / DSM 2661 / JAL-1 / JCM 10045 / NBRC 100440) (Methanococcus jannaschii).